Here is a 178-residue protein sequence, read N- to C-terminus: Membrane-spanning protein YciB (178 aa).

5 consecutive transmembrane segments (helical) span residues 22–42 (IFIA…ITSI), 52–72 (LINL…HNSS), 76–96 (WKVT…YLFI), 121–141 (LFWS…ILYF), and 151–171 (IFGL…YIYF).

This sequence belongs to the YciB family.

It is found in the cell membrane. Functionally, plays a role in cell envelope biogenesis, maintenance of cell envelope integrity and membrane homeostasis. The polypeptide is Membrane-spanning protein YciB (Buchnera aphidicola subsp. Baizongia pistaciae (strain Bp)).